Here is a 320-residue protein sequence, read N- to C-terminus: ATP-dependent 6-phosphofructokinase (320 aa).

Gly-12 is a binding site for ATP. Residues 22 to 26 (RGVVR) and 55 to 60 (RYSVSD) contribute to the ADP site. Residues 73 to 74 (RF) and 103 to 106 (GDGS) contribute to the ATP site. Residue Asp-104 coordinates Mg(2+). Position 126–128 (126–128 (TID)) interacts with substrate. The Proton acceptor role is filled by Asp-128. Arg-155 provides a ligand contact to ADP. Substrate-binding positions include Arg-163 and 170–172 (MGR). ADP-binding positions include 186-188 (GCE), Lys-212, and 214-216 (KKH). Substrate is bound by residues Glu-223, Arg-244, and 250 to 253 (HIQR).

This sequence belongs to the phosphofructokinase type A (PFKA) family. ATP-dependent PFK group I subfamily. Prokaryotic clade 'B1' sub-subfamily. As to quaternary structure, homotetramer. The cofactor is Mg(2+).

The protein resides in the cytoplasm. It catalyses the reaction beta-D-fructose 6-phosphate + ATP = beta-D-fructose 1,6-bisphosphate + ADP + H(+). The protein operates within carbohydrate degradation; glycolysis; D-glyceraldehyde 3-phosphate and glycerone phosphate from D-glucose: step 3/4. Its activity is regulated as follows. Allosterically activated by ADP and other diphosphonucleosides, and allosterically inhibited by phosphoenolpyruvate. Catalyzes the phosphorylation of D-fructose 6-phosphate to fructose 1,6-bisphosphate by ATP, the first committing step of glycolysis. This chain is ATP-dependent 6-phosphofructokinase, found in Citrobacter koseri (strain ATCC BAA-895 / CDC 4225-83 / SGSC4696).